The primary structure comprises 282 residues: CD320 antigen (282 aa).

The first 35 residues, 1–35, serve as a signal peptide directing secretion; that stretch reads MSGGWMAQVGAWRTGALGLALLLLLGLGLGLEAAA. Residues 36–229 lie on the Extracellular side of the membrane; sequence SPLSTPTSAQ…GDQSGSPTAY (194 aa). In terms of domain architecture, LDL-receptor class A 1 spans 53–90; it reads SCPPTKFQCRTSGLCVPLTWRCDRDLDCSDGSDEEECR. 3 cysteine pairs are disulfide-bonded: Cys54–Cys67, Cys61–Cys80, and Cys74–Cys89. Ca(2+) is bound by residues Trp72, Asp75, Asp77, Asp79, Asp85, and Glu86. Asn126 carries an N-linked (GlcNAc...) asparagine glycan. The 38-residue stretch at 131 to 168 folds into the LDL-receptor class A 2 domain; it reads ACLAGELRCTLSDDCIPLTWRCDGHPDCPDSSDELGCG. Intrachain disulfides connect Cys132–Cys145, Cys139–Cys158, and Cys152–Cys167. Residues Trp150, Asp153, His155, Asp157, Asp163, and Glu164 each coordinate Ca(2+). N-linked (GlcNAc...) asparagine glycosylation is found at Asn195 and Asn213. Residues 199-223 form a disordered region; sequence MGPPVTLESVPSVGNATSSSAGDQS. Residues 210–223 are compositionally biased toward polar residues; the sequence is SVGNATSSSAGDQS. The helical transmembrane segment at 230–250 threads the bilayer; the sequence is GVIAAAAVLSASLVTATLLLL. Topologically, residues 251 to 282 are cytoplasmic; that stretch reads SWLRAQERLRPLGLLVAMKESLLLSEQKTSLP.

Interacts (via LDL-receptor class A domains) with TCN2. Detected in the germinal center (GC) of lymphoid follicles (at protein level). Expressed abundantly on follicular dendritic cells (FDCs).

The protein resides in the cell membrane. Receptor for transcobalamin saturated with cobalamin (TCbl). Plays an important role in cobalamin uptake. Plasma membrane protein that is expressed on follicular dendritic cells (FDC) and mediates interaction with germinal center B cells. Functions as costimulator to promote B cell responses to antigenic stimuli; promotes B cell differentiation and proliferation. Germinal center-B (GC-B) cells differentiate into memory B-cells and plasma cells (PC) through interaction with T-cells and follicular dendritic cells (FDC). CD320 augments the proliferation of PC precursors generated by IL-10. This Homo sapiens (Human) protein is CD320 antigen (CD320).